Here is an 89-residue protein sequence, read N- to C-terminus: NADH-ubiquinone oxidoreductase chain 4L (89 aa).

The next 3 membrane-spanning stretches (helical) occupy residues 1–21 (MSLT…NRKN), 22–42 (IILM…LILV), and 57–77 (IYII…LVAF).

Belongs to the complex I subunit 4L family.

It is found in the mitochondrion membrane. It catalyses the reaction a ubiquinone + NADH + 5 H(+)(in) = a ubiquinol + NAD(+) + 4 H(+)(out). Functionally, core subunit of the mitochondrial membrane respiratory chain NADH dehydrogenase (Complex I) that is believed to belong to the minimal assembly required for catalysis. Complex I functions in the transfer of electrons from NADH to the respiratory chain. The immediate electron acceptor for the enzyme is believed to be ubiquinone. The sequence is that of NADH-ubiquinone oxidoreductase chain 4L (ND4L) from Hypocrea jecorina (Trichoderma reesei).